A 186-amino-acid chain; its full sequence is UPF0200 protein PH1008 (186 aa).

An ATP-binding site is contributed by 7 to 14 (GMPGSGKG).

The protein belongs to the UPF0200 family.

The polypeptide is UPF0200 protein PH1008 (Pyrococcus horikoshii (strain ATCC 700860 / DSM 12428 / JCM 9974 / NBRC 100139 / OT-3)).